The chain runs to 111 residues: Cytochrome c (111 aa).

Ser1 carries the post-translational modification N-acetylserine. Heme c is bound by residues Cys22, Cys25, and His26. Lys80 carries the post-translational modification N6,N6,N6-trimethyllysine. A heme c-binding site is contributed by Met88.

It belongs to the cytochrome c family. Post-translationally, binds 1 heme c group covalently per subunit.

Its subcellular location is the mitochondrion intermembrane space. Its function is as follows. Electron carrier protein. The oxidized form of the cytochrome c heme group can accept an electron from the heme group of the cytochrome c1 subunit of cytochrome reductase. Cytochrome c then transfers this electron to the cytochrome oxidase complex, the final protein carrier in the mitochondrial electron-transport chain. This is Cytochrome c from Ulva intestinalis (Hollow green nori).